A 495-amino-acid chain; its full sequence is Cobyric acid synthase (495 aa).

The 189-residue stretch at 256–444 folds into the GATase cobBQ-type domain; that stretch reads KVNVAVVLLR…VHGILDNPSV (189 aa). Cys337 serves as the catalytic Nucleophile. The active site involves His436.

Belongs to the CobB/CobQ family. CobQ subfamily.

Its pathway is cofactor biosynthesis; adenosylcobalamin biosynthesis. Its function is as follows. Catalyzes amidations at positions B, D, E, and G on adenosylcobyrinic A,C-diamide. NH(2) groups are provided by glutamine, and one molecule of ATP is hydrogenolyzed for each amidation. The chain is Cobyric acid synthase from Bacteroides fragilis (strain ATCC 25285 / DSM 2151 / CCUG 4856 / JCM 11019 / LMG 10263 / NCTC 9343 / Onslow / VPI 2553 / EN-2).